The sequence spans 213 residues: Kynurenine formamidase (213 aa).

Trp18 contacts substrate. Residues His48, His52, and Asp54 each coordinate Zn(2+). His58 (proton donor/acceptor) is an active-site residue. Positions 160 and 172 each coordinate Zn(2+).

The protein belongs to the Cyclase 1 superfamily. KynB family. Homodimer. The cofactor is Zn(2+).

The enzyme catalyses N-formyl-L-kynurenine + H2O = L-kynurenine + formate + H(+). It functions in the pathway amino-acid degradation; L-tryptophan degradation via kynurenine pathway; L-kynurenine from L-tryptophan: step 2/2. Its function is as follows. Catalyzes the hydrolysis of N-formyl-L-kynurenine to L-kynurenine, the second step in the kynurenine pathway of tryptophan degradation. The protein is Kynurenine formamidase of Burkholderia pseudomallei (strain 1710b).